We begin with the raw amino-acid sequence, 146 residues long: Hemoglobin subunit beta (146 aa).

At valine 1 the chain carries N-acetylvaline. The Globin domain maps to 2–146 (HLSDGEKNAI…VANALAHKYH (145 aa)). Serine 44 carries the phosphoserine modification. Lysine 59 carries the N6-acetyllysine modification. Heme b is bound at residue histidine 63. At lysine 82 the chain carries N6-acetyllysine. Heme b is bound at residue histidine 92. At cysteine 93 the chain carries S-nitrosocysteine. Residue lysine 144 is modified to N6-acetyllysine.

This sequence belongs to the globin family. Heterotetramer of two alpha chains and two beta chains. As to expression, red blood cells.

In terms of biological role, involved in oxygen transport from the lung to the various peripheral tissues. This is Hemoglobin subunit beta (HBB) from Spermophilus citellus (European ground squirrel).